The sequence spans 390 residues: Elongation factor Ts, mitochondrial (390 aa).

It belongs to the EF-Ts family.

The protein localises to the mitochondrion. Associates with the EF-Tu.GDP complex and induces the exchange of GDP to GTP. It remains bound to the aminoacyl-tRNA.EF-Tu.GTP complex up to the GTP hydrolysis stage on the ribosome. The sequence is that of Elongation factor Ts, mitochondrial from Plasmodium vivax (strain Salvador I).